A 379-amino-acid chain; its full sequence is Pentatricopeptide repeat-containing protein At3g25210, mitochondrial (379 aa).

PPR repeat units follow at residues 142–177 (SVPLYNCIIRFCCGRKFLFNRAFDVYNKMLRSDDSK), 179–221 (DLET…GVIP), 222–256 (DTFVLNMIIKAYAKCLEVDEAIRVFKEMALYGSEP), 257–291 (NAYTYSYLVKGVCEKGRVGQGLGFYKEMQVKGMVP), 292–326 (NGSCYMVLICSLSMERRLDEAVEVVYDMLANSLSP), and 327–361 (DMLTYNTVLTELCRGGRGSEALEMVEEWKKRDPVM).

The protein belongs to the PPR family. P subfamily.

It localises to the mitochondrion. The protein is Pentatricopeptide repeat-containing protein At3g25210, mitochondrial of Arabidopsis thaliana (Mouse-ear cress).